The chain runs to 196 residues: uncharacterized protein (196 aa).

The Bro-N domain maps to 58–163 (HKFFDAIKDS…IILPNNYHKN (106 aa)).

This is an uncharacterized protein from Acanthamoeba polyphaga mimivirus (APMV).